Reading from the N-terminus, the 400-residue chain is Elongation factor Tu (400 aa).

The region spanning 10–209 is the tr-type G domain; that stretch reads KPHVNIGTIG…EVDKYIPTPE (200 aa). The G1 stretch occupies residues 19–26; it reads GHVDHGKT. 19-26 contributes to the GTP binding site; the sequence is GHVDHGKT. Thr26 contributes to the Mg(2+) binding site. The segment at 60-64 is G2; sequence GITIN. Residues 81–84 form a G3 region; the sequence is DCPG. Residues 81 to 85 and 136 to 139 each bind GTP; these read DCPGH and NKAD. Residues 136 to 139 form a G4 region; it reads NKAD. The G5 stretch occupies residues 174–176; the sequence is SGL.

It belongs to the TRAFAC class translation factor GTPase superfamily. Classic translation factor GTPase family. EF-Tu/EF-1A subfamily. Monomer.

It localises to the cytoplasm. The catalysed reaction is GTP + H2O = GDP + phosphate + H(+). Functionally, GTP hydrolase that promotes the GTP-dependent binding of aminoacyl-tRNA to the A-site of ribosomes during protein biosynthesis. The chain is Elongation factor Tu from Heliobacterium modesticaldum (strain ATCC 51547 / Ice1).